The following is a 247-amino-acid chain: Hydroxyacylglutathione hydrolase 1 (247 aa).

Positions 54, 56, 58, 59, 111, 128, and 165 each coordinate Zn(2+).

Belongs to the metallo-beta-lactamase superfamily. Glyoxalase II family. Monomer. The cofactor is Zn(2+).

It catalyses the reaction an S-(2-hydroxyacyl)glutathione + H2O = a 2-hydroxy carboxylate + glutathione + H(+). It functions in the pathway secondary metabolite metabolism; methylglyoxal degradation; (R)-lactate from methylglyoxal: step 2/2. Its function is as follows. Thiolesterase that catalyzes the hydrolysis of S-D-lactoyl-glutathione to form glutathione and D-lactic acid. The chain is Hydroxyacylglutathione hydrolase 1 from Vibrio vulnificus (strain YJ016).